Consider the following 329-residue polypeptide: (12E)-labda-8(17),12,14-triene synthase (329 aa).

Mg(2+) is bound by residues Asp-90 and Glu-95. A DDXXXE motif motif is present at residues 90 to 95 (DDMHGE). Position 184 (Arg-184) interacts with substrate. Mg(2+)-binding residues include Asn-230 and Ser-234. Positions 230–238 (NDLASYERE) match the NXXXSXXXE motif motif. Arg-237 serves as a coordination point for substrate. Glu-238 serves as a coordination point for Mg(2+). Substrate is bound at residue 316-317 (RY).

It belongs to the terpene synthase family. It depends on Mg(2+) as a cofactor.

It carries out the reaction (+)-copalyl diphosphate = (12E)-labda-8(17),12,14-triene + diphosphate. Its function is as follows. Involved in the biosynthesis of the mercapturic acid derivative diterpene cyslabdan A, a potentiator of the beta-lactam antibiotic imipenem. Catalyzes the conversion of (+)-copalyl diphosphate to yield labda-8(17),12(E),14-triene (biformene). This chain is (12E)-labda-8(17),12,14-triene synthase, found in Streptomyces cyslabdanicus.